Here is a 118-residue protein sequence, read N- to C-terminus: Large ribosomal subunit protein bL20 (118 aa).

The protein belongs to the bacterial ribosomal protein bL20 family.

Its function is as follows. Binds directly to 23S ribosomal RNA and is necessary for the in vitro assembly process of the 50S ribosomal subunit. It is not involved in the protein synthesizing functions of that subunit. This chain is Large ribosomal subunit protein bL20, found in Thermotoga petrophila (strain ATCC BAA-488 / DSM 13995 / JCM 10881 / RKU-1).